The primary structure comprises 253 residues: ATP synthase subunit a (253 aa).

A run of 6 helical transmembrane segments spans residues 27 to 47 (ISFT…IGFF), 87 to 107 (FFPF…IGMV), 117 to 137 (IIVT…VGLI), 146 to 166 (LFAP…IEII), 196 to 216 (FTVM…LAFA), and 224 to 244 (LEFL…CVYL).

The protein belongs to the ATPase A chain family. As to quaternary structure, F-type ATPases have 2 components, CF(1) - the catalytic core - and CF(0) - the membrane proton channel. CF(1) has five subunits: alpha(3), beta(3), gamma(1), delta(1), epsilon(1). CF(0) has three main subunits: a(1), b(2) and c(9-12). The alpha and beta chains form an alternating ring which encloses part of the gamma chain. CF(1) is attached to CF(0) by a central stalk formed by the gamma and epsilon chains, while a peripheral stalk is formed by the delta and b chains.

Its subcellular location is the cell inner membrane. Key component of the proton channel; it plays a direct role in the translocation of protons across the membrane. This Hyphomonas neptunium (strain ATCC 15444) protein is ATP synthase subunit a.